A 324-amino-acid chain; its full sequence is NADH-ubiquinone oxidoreductase chain 1 (324 aa).

8 helical membrane-spanning segments follow: residues 9 to 29 (LINPLAYAVPVLIAVAFLTLV), 75 to 95 (ILFLTAPVLALILAMMLWAPM), 106 to 126 (LGILFIMAISSLAVYSILGSG), 146 to 166 (ISYEVSLGLILLSAVIFSGGY), 178 to 198 (TWLLLPLWPLAIMWFISTLAE), 212 to 232 (ELVSGFNVEYAAGPFALFFLA), 259 to 279 (ELMTISIATKTAMLSILFLWM), and 299 to 319 (FLPITLVLVLWHIALPIALAG).

This sequence belongs to the complex I subunit 1 family. In terms of assembly, core subunit of respiratory chain NADH dehydrogenase (Complex I) which is composed of 45 different subunits.

The protein localises to the mitochondrion inner membrane. It carries out the reaction a ubiquinone + NADH + 5 H(+)(in) = a ubiquinol + NAD(+) + 4 H(+)(out). In terms of biological role, core subunit of the mitochondrial membrane respiratory chain NADH dehydrogenase (Complex I) which catalyzes electron transfer from NADH through the respiratory chain, using ubiquinone as an electron acceptor. Essential for the catalytic activity and assembly of complex I. This Danio rerio (Zebrafish) protein is NADH-ubiquinone oxidoreductase chain 1 (mt-nd1).